Consider the following 153-residue polypeptide: Mitochondrial import inner membrane translocase subunit TIM14 (153 aa).

Topologically, residues 1–43 (MDGTGISDGSSVTGDAAAGFPAGATQAPGSKQGMDLYFDNALQ) are mitochondrial intermembrane. The helical transmembrane segment at 44–66 (YMGEHPVLAGVGGFLALYVGAGV) threads the bilayer. Residues 67–153 (YKGVQTRLNG…FLEKKGIVRK (87 aa)) are Mitochondrial matrix-facing. The region spanning 96–153 (EALQILNLKENNLTTKKLKEVHRKIMLANHPDKGGSPYLATKINEAKDFLEKKGIVRK) is the J domain.

It belongs to the TIM14 family. In terms of assembly, heterodimer with PAM16. Component of the PAM complex, at least composed of mtHsp70, MGE1, TIM44, PAM16, PAM17 and PAM18.

Its subcellular location is the mitochondrion inner membrane. In terms of biological role, essential component of the PAM complex, a complex required for the translocation of transit peptide-containing proteins from the inner membrane into the mitochondrial matrix in an ATP-dependent manner. In the complex, it is required to stimulate activity of mtHSP70 (SSC1). The protein is Mitochondrial import inner membrane translocase subunit TIM14 (PAM18) of Candida glabrata (strain ATCC 2001 / BCRC 20586 / JCM 3761 / NBRC 0622 / NRRL Y-65 / CBS 138) (Yeast).